The chain runs to 701 residues: Arachidonate 12-lipoxygenase, 12R-type (701 aa).

The 118-residue stretch at 2–119 folds into the PLAT domain; it reads ATYKVKVATG…TLALREATGK (118 aa). In terms of domain architecture, Lipoxygenase spans 120-701; sequence ITADDTLPIL…PVLIENSISI (582 aa). 5 residues coordinate Fe cation: His398, His403, His578, Asn582, and Ile701.

The protein belongs to the lipoxygenase family. It depends on Fe cation as a cofactor. As to expression, expressed in skin epidermis and other stratified epithelia including tongue and forestomach. Low levels of expression are found in trachea, brain and lung. Not expressed in intestine, liver, kidney, adipose tissue, muscle or hematopoietic cells.

Its subcellular location is the cytoplasm. It is found in the perinuclear region. The enzyme catalyses 1-O-methyl-(5Z,8Z,11Z,14Z)-eicosatetraenoate + O2 = 1-O-methyl (5Z,8Z,10E,12R,14Z)-hydroperoxyiecosatetraenoate. The catalysed reaction is 1-O-methyl-(5Z,8Z,11Z,14Z)-eicosatetraenoate + O2 = 1-O-methyl-8-hydroperoxy-(5Z,9E,11Z,14Z)-eicosatetraenoate. It catalyses the reaction (5Z,8Z,11Z,14Z)-eicosatetraenoate + O2 = (12R)-hydroperoxy-(5Z,8Z,10E,14Z)-eicosatetraenoate. It carries out the reaction N-[omega-(9Z,12Z)-octadecadienoyloxy]acyl-beta-D-glucosyl-(1&lt;-&gt;1)-octadecasphing-4E-enine + O2 = N-[omega-(9R)-hydroperoxy-(10E,12Z)-octadecadienoyloxy]acyl-beta-D-glucosyl-(1&lt;-&gt;1)-octadecasphing-4E-enine. The enzyme catalyses a N-[omega-(9Z,12Z)-octadecadienoyloxy]-acylsphin-4E-enine + O2 = a N-[omega-(9R)-hydroperoxy-(10E,12Z)-octadecadienoyloxy]-acylsphin-4E-enine. The catalysed reaction is (6Z,9Z,12Z)-octadecatrienoate + O2 = 10-hydroperoxy-(6Z,8E,12Z)-octadecatrienoate. It catalyses the reaction (4Z,7Z,10Z,13Z,16Z,19Z)-docosahexaenoate + O2 = 14-hydroperoxy-(4Z,7Z,10Z,12E,16Z,19Z)-docosahexaenoate. It carries out the reaction (8Z,11Z,14Z)-eicosatrienoate + O2 = (8Z,10E,14Z)-12-hydroperoxyeicosatrienoate. The enzyme catalyses (5Z,8Z,11Z,14Z,17Z)-eicosapentaenoate + O2 = (5Z,7Z,8Z,10E,14Z,17Z)-12-hydroperoxyeicosapentaenoate. The catalysed reaction is (6Z,9Z,12Z)-octadecatrienoate + O2 = 10R-hydroperoxy-(6Z,8E,12Z)-octadecatrienoate. It catalyses the reaction 1-O-methyl-(5Z,8Z,11Z,14Z)-eicosatetraenoate + O2 = 1-O-methyl-(8R)-hydroperoxy-(5Z,9E,11Z,14Z)-eicosatrienoate. It carries out the reaction 1-O-methyl-(9Z,12Z)-octadecadienoate + O2 = 1-O-methyl-(9R)-hydroperoxy-(10E,12Z)-octadecadienoate. The enzyme catalyses 1-O-methyl-20-hydroxy-(5Z,8Z,11Z,14Z)-eicosatetraenoate + O2 = 1-O-methyl-8-hydroperoxy-20-hydroxy-(5Z,9E,11Z,14Z)-eicosatetraenoate. The catalysed reaction is 1-O-methyl-20-hydroxy-(5Z,8Z,11Z,14Z)-eicosatetraenoate + O2 = 1-O-methyl-12-hydroperoxy-20-hydroxy-(5Z,8Z,10E,14Z)-eicosatetraenoate. It catalyses the reaction 1-O-methyl-20-hydroxy-(5Z,8Z,11Z,14Z)-eicosatetraenoate + O2 = 1-O-methyl-9-hydroperoxy-20-hydroxy-(5Z,7E,11Z,14Z)-eicosatetraenoate. It carries out the reaction 1-O-methyl-(9Z,12Z)-octadecadienoate + O2 = 1-O-methyl-(13S)-hydroperoxy-(9Z,11E)-octadecadienoate. Its pathway is lipid metabolism; hydroperoxy eicosatetraenoic acid biosynthesis. It functions in the pathway lipid metabolism; sphingolipid metabolism. With respect to regulation, increased by calcium. In terms of biological role, catalyzes the regio and stereo-specific incorporation of a single molecule of dioxygen into free and esterified polyunsaturated fatty acids generating lipid hydroperoxides that can be further reduced to the corresponding hydroxy species. Does not convert arachidonic acid to (12R)-hydroperoxyeicosatetraenoic acid/(12R)-HPETE. In the skin, acts upstream of ALOXE3 on the lineolate moiety of esterified omega-hydroxyacyl-sphingosine (EOS) ceramides to produce an epoxy-ketone derivative, a crucial step in the conjugation of omega-hydroxyceramide to membrane proteins. Therefore plays a crucial role in the synthesis of corneocytes lipid envelope and the establishment of the skin barrier to water loss. May also play a role in the regulation of the expression of airway mucins. The sequence is that of Arachidonate 12-lipoxygenase, 12R-type from Mus musculus (Mouse).